A 218-amino-acid polypeptide reads, in one-letter code: MGRRPARCYRYCKNKPYPKSRFCRGVPDPKIRIFDLGRKKATVEDFPLCVHLVSDEYEQLSSEALEAGRICCNKYLVKYCGKDQFHIRMRLHPFHVIRINKMLSCAGADRLQTGMRGAFGKPQGTVARVRIGQPIMSVRSSDRYKAQVIEALRRAKFKFPGRQKIYVSKKWGFTKYERERYEELRDDNRLEPDGCNVKYRPEHGPIAAWEKAQRDVYA.

Belongs to the universal ribosomal protein uL16 family. As to quaternary structure, component of the large ribosomal subunit. Mature ribosomes consist of a small (40S) and a large (60S) subunit. The 40S subunit contains about 33 different proteins and 1 molecule of RNA (18S). The 60S subunit contains about 49 different proteins and 3 molecules of RNA (28S, 5.8S and 5S).

This chain is Large ribosomal subunit protein uL16 (RpL10), found in Drosophila melanogaster (Fruit fly).